The chain runs to 312 residues: Olfactory receptor 6C74 (312 aa).

At 1 to 23 (MRNHTTVANFILLGLTDDPQLQV) the chain is on the extracellular side. N3 is a glycosylation site (N-linked (GlcNAc...) asparagine). Residues 24 to 44 (IIFLLLFFTYMLSITGNLTII) form a helical membrane-spanning segment. At 45–63 (TLTLLDLHLKTPMYFFLRN) the chain is on the cytoplasmic side. The helical transmembrane segment at 64–84 (FSFLEVSFTTVYIPKFLVSMA) threads the bilayer. Residues 85–95 (TGDKTISYNDC) are Extracellular-facing. A disulfide bridge links C95 with C177. The helical transmembrane segment at 96-116 (AAQLFFTILLGATEFFLLAAM) threads the bilayer. The Cytoplasmic portion of the chain corresponds to 117 to 140 (SYERYVAICKPLHYTTIMSSRVCS). A helical transmembrane segment spans residues 141–161 (LLVFASWMAGFLIIFPPLLMG). Residues 162–194 (LQLDFCAANTVDHFFCDVSPILQLSCTDTDIIE) are Extracellular-facing. Residues 195 to 215 (LMMLLSAILTLLVTLVLVILS) form a helical membrane-spanning segment. Over 216-237 (YTNIIRTILKIPSSQQRKKAFS) the chain is Cytoplasmic. A helical membrane pass occupies residues 238–258 (TCSSHMVVVSISYGSCIFMYV). Over 259 to 269 (KPSAKERVSLN) the chain is Extracellular. A helical transmembrane segment spans residues 270 to 290 (KGIALLSTSVAPMLNPFIYTL). Topologically, residues 291–312 (RNKQVKDVFKHTVKKIELFSMK) are cytoplasmic.

Belongs to the G-protein coupled receptor 1 family.

It is found in the cell membrane. Odorant receptor. The polypeptide is Olfactory receptor 6C74 (OR6C74) (Homo sapiens (Human)).